Reading from the N-terminus, the 187-residue chain is Putative type I specificity subunit S.MpnORF289P N-terminus (187 aa).

Belongs to the type-I restriction system S methylase family. The methyltransferase is composed of M and S polypeptides.

The N-terminal section of a specificity (S) subunit of a type I methyltransferase (MTase); this subunit dictates DNA sequence specificity. The single R subunit has multiple frameshifts and is probably not expressed. This Mycoplasma pneumoniae (strain ATCC 29342 / M129 / Subtype 1) (Mycoplasmoides pneumoniae) protein is Putative type I specificity subunit S.MpnORF289P N-terminus.